Consider the following 317-residue polypeptide: Melanocyte-stimulating hormone receptor (317 aa).

Residues 1–37 (MPVLGSQRRLLGSLNCTPPATFPLTLAPNRTGPQCLE) lie on the Extracellular side of the membrane. An N-linked (GlcNAc...) asparagine glycan is attached at Asn-29. Residues 38–63 (VSIPDGLFLSLGLVSLVENVLVVAAI) traverse the membrane as a helical segment. The Cytoplasmic portion of the chain corresponds to 64 to 72 (AKNRNLHSP). A helical membrane pass occupies residues 73 to 93 (MYYFICCLAVSDLLVSVSNVL). Topologically, residues 94–118 (ETAVMLLLEAGALAARAAVVQQLDN) are extracellular. The chain crosses the membrane as a helical span at residues 119-140 (VIDMLICGSMVSSLCFLGAIAV). Topologically, residues 141–163 (DRYISIFYALRYHSVVTLPRAWR) are cytoplasmic. A helical transmembrane segment spans residues 164 to 183 (IIAAIWVASILTSLLFITYY). The Extracellular segment spans residues 184–191 (NHTVVLLC). Residues 192 to 211 (LVGFFIAMLALMAVLYVHML) traverse the membrane as a helical segment. At 212 to 240 (ARACQHARGIARLQKRQRPIHQGFGLKGA) the chain is on the cytoplasmic side. Residues 241–266 (ATLTILLGVFFLCWGPFFLHLSLIVL) form a helical membrane-spanning segment. Over 267-279 (CPQHPTCGCIFKN) the chain is Extracellular. A helical membrane pass occupies residues 280 to 300 (FNLFLALIICNAIVDPLIYAF). The Cytoplasmic portion of the chain corresponds to 301-317 (RSQELRKTLQEVLQCSW). Residue Cys-315 is the site of S-palmitoyl cysteine attachment.

It belongs to the G-protein coupled receptor 1 family. Interacts with MGRN1, but does not undergo MGRN1-mediated ubiquitination; this interaction competes with GNAS-binding and thus inhibits agonist-induced cAMP production. Interacts with OPN3; the interaction results in a decrease in MC1R-mediated cAMP signaling and ultimately a decrease in melanin production in melanocytes.

It is found in the cell membrane. Functionally, receptor for MSH (alpha, beta and gamma) and ACTH. The activity of this receptor is mediated by G proteins which activate adenylate cyclase. Mediates melanogenesis, the production of eumelanin (black/brown) and phaeomelanin (red/yellow), via regulation of cAMP signaling in melanocytes. This chain is Melanocyte-stimulating hormone receptor (MC1R), found in Capreolus capreolus (European roe deer).